The primary structure comprises 172 residues: Single-stranded DNA-binding protein A (172 aa).

The 104-residue stretch at 1–104 folds into the SSB domain; that stretch reads MLNRVVLVGR…VQAESVQFLE (104 aa). Phosphotyrosine is present on Tyr82. A disordered region spans residues 103-172; it reads LEPKNGGGSG…IDISDDDLPF (70 aa). Residues 107–131 are compositionally biased toward gly residues; it reads NGGGSGSGGYNEGNSGGGQYFGGGQ. Positions 132 to 149 are enriched in low complexity; the sequence is NDNPFGGNQNNQRRNQGN. Positions 167-172 match the Important for interaction with partner proteins motif; sequence DDDLPF.

As to quaternary structure, homotetramer. Interacts with proteins involved in DNA metabolism such as PriA, RecQ, RecG, RecS, DnaE, RarA, RecJ, RecO, SbcC, RecD2 (formerly YrrC), XseA and Ung. Interacts with RecQ via its 10 C-terminal residues. Interacts with RecD2. In terms of processing, phosphorylated by YwqD, which increases ssDNA affinity; dephosphorylated by YwqE.

The protein localises to the cytoplasm. The protein resides in the nucleoid. Its function is as follows. Plays an important role in DNA replication, recombination and repair. Binds to single-stranded (ss)DNA and to an array of partner proteins to recruit them to their sites of action during DNA metabolism. Associates with oriC, this requires DnaA. SsbA binding to ssDNA prevents DnaB and DnaD individually from binding to DNA. Has a 20-fold higher affinity for ssDNA than SsbB; SsbA and DprA activate the homologous DNA strand exchange function of RecA-ATP. Enhances the activity of 3'-5' DNA helicase RecQ. The protein is Single-stranded DNA-binding protein A (ssbA) of Bacillus subtilis (strain 168).